Reading from the N-terminus, the 305-residue chain is N-acetylneuraminate lyase A (305 aa).

Aceneuramate contacts are provided by T51 and T52. Y143 (proton donor) is an active-site residue. Residue K173 is the Schiff-base intermediate with substrate of the active site. Residues S175, G197, D199, E200, and S216 each coordinate aceneuramate.

The protein belongs to the DapA family. NanA subfamily. Homotetramer.

The protein localises to the cytoplasm. The catalysed reaction is aceneuramate = aldehydo-N-acetyl-D-mannosamine + pyruvate. It participates in amino-sugar metabolism; N-acetylneuraminate degradation. In terms of biological role, catalyzes the cleavage of N-acetylneuraminic acid (sialic acid) to form pyruvate and N-acetylmannosamine via a Schiff base intermediate. It prevents sialic acids from being recycled and returning to the cell surface. Involved in the N-glycolylneuraminic acid (Neu5Gc) degradation pathway. The polypeptide is N-acetylneuraminate lyase A (npl-a) (Xenopus laevis (African clawed frog)).